The following is a 217-amino-acid chain: Putative oxidative stress regulator AosR (217 aa).

Residues 5–9 (CGRRC) carry the CXXXC motif. Residues Cys-5 and Cys-9 are joined by a disulfide bond.

The protein belongs to the AosR family.

In Mycobacterium leprae (strain TN), this protein is Putative oxidative stress regulator AosR.